Reading from the N-terminus, the 464-residue chain is Secretion-regulating guanine nucleotide exchange factor (464 aa).

RCC1 repeat units follow at residues 14–66, 68–118, 119–170, 172–229, 230–282, 283–349, and 350–401; these read AAAL…VVTD, GSLF…ILTE, NGQV…AATA, GTVF…SLTD, AGEL…AQTV, TGKV…LAVI, and GGVC…ALCQ. The segment covering 301–313 has biased composition (basic and acidic residues); the sequence is VETREGWESEKQD. Positions 301-323 are disordered; that stretch reads VETREGWESEKQDPSLPGSGPQK. A disordered region spans residues 411–464; that stretch reads HPSVTSPSPDATKEARSQEAMEQERNQKERHAETSPQAQSDRFRNGGLVAETLE. Over residues 421-443 the composition is skewed to basic and acidic residues; it reads ATKEARSQEAMEQERNQKERHAE. A Phosphoserine modification is found at Ser427.

As to quaternary structure, interacts with SEC5. The interaction occurs only in the presence of magnesium or manganese and is stimulated by dCTP or GTP.

It localises to the cytoplasm. It is found in the nucleus. Probable guanine nucleotide exchange factor (GEF), which may be involved in the secretion process. The chain is Secretion-regulating guanine nucleotide exchange factor (SERGEF) from Bos taurus (Bovine).